A 27-amino-acid polypeptide reads, in one-letter code: DELTA-pseudomyrmecitoxin-Pp1a subunit A (27 aa).

As to quaternary structure, heterodimer composed of subunit A and subunit B (DELTA-PSDTX-Pp1a); disulfide-linked. As to expression, expressed by the venom gland.

The protein localises to the secreted. Its function is as follows. This heterodimer has insecticidal and cytotoxic properties. Induces immediate paralysis when injected into blowflies (Lucilia cuprina), and then death within 24 hours. Also inhibits the growth of Aedes albopictus mosquito C6/36 cells. The chain is DELTA-pseudomyrmecitoxin-Pp1a subunit A from Pseudomyrmex penetrator (Ant).